We begin with the raw amino-acid sequence, 171 residues long: UPF0763 protein Hac_0849 (171 aa).

Belongs to the UPF0763 family.

The sequence is that of UPF0763 protein Hac_0849 from Helicobacter acinonychis (strain Sheeba).